Reading from the N-terminus, the 429-residue chain is Adenylosuccinate synthetase (429 aa).

GTP contacts are provided by residues 12–18 and 40–42; these read GDEGKGK and GHT. Residue Asp13 is the Proton acceptor of the active site. Mg(2+)-binding residues include Asp13 and Gly40. Residues 13–16, 38–41, Thr127, Arg141, Gln222, Thr237, and Arg301 contribute to the IMP site; these read DEGK and NAGH. The Proton donor role is filled by His41. A substrate-binding site is contributed by 297–303; that stretch reads ATTGRPR. GTP-binding positions include Arg303, 329–331, and 411–413; these read KLD and SLG.

Belongs to the adenylosuccinate synthetase family. Homodimer. Requires Mg(2+) as cofactor.

The protein localises to the cytoplasm. It carries out the reaction IMP + L-aspartate + GTP = N(6)-(1,2-dicarboxyethyl)-AMP + GDP + phosphate + 2 H(+). It participates in purine metabolism; AMP biosynthesis via de novo pathway; AMP from IMP: step 1/2. In terms of biological role, plays an important role in the de novo pathway of purine nucleotide biosynthesis. Catalyzes the first committed step in the biosynthesis of AMP from IMP. The protein is Adenylosuccinate synthetase of Endomicrobium trichonymphae.